An 821-amino-acid polypeptide reads, in one-letter code: MVSWGRFICLVLVTMATLSLARPSFSLVEDTTLEPEEPPTKYQISQPEAYVVAPGESLELQCMLKDAAVISWTKDGVHLGPNNRTVLIGEYLQIKGATPRDSGLYACTAARTVDSETWIFMVNVTDAISSGDDEDDTDSSEDVVSENRSNQRAPYWTNTEKMEKRLHACPAANTVKFRCPAGGNPTSTMRWLKNGKEFKQEHRIGGYKVRNQHWSLIMESVVPSDKGNYTCLVENEYGSINHTYHLDVVERSPHRPILQAGLPANASTVVGGDVEFVCKVYSDAQPHIQWIKHVEKNGSKNGPDGLPYLKVLKAAGVNTTDKEIEVLYIRNVTFEDAGEYTCLAGNSIGISFHSAWLTVLPAPVREKEITASPDYLEIAIYCIGVFLIACMVVTVIFCRMKTTTKKPDFSSQPAVHKLTKRIPLRRQVTVSAESSSSMNSNTPLVRITTRLSSTADTPMLAGVSEYELPEDPKWEFPRDKLTLGKPLGEGCFGQVVMAEAVGIDKDKPKEAVTVAVKMLKDDATEKDLSDLVSEMEMMKMIGKHKNIINLLGACTQDGPLYVIVEYASKGNLREYLRARRPPGMEYSYDINRVPEEQMTFKDLVSCTYQLARGMEYLASQKCIHRDLAARNVLVTENNVMKIADFGLARDINNIDYYKKTTNGRLPVKWMAPEALFDRVYTHQSDVWSFGVLMWEIFTLGGSPYPGIPVEELFKLLKEGHRMDKPTNCTNELYMMMRDCWHAVPSQRPTFKQLVEDLDRILTLTTNEEYLDLTQPLEQYSPSYPDTSSSCSSGDDSVFSPDPMPYEPCLPQYPHINGSVKT.

An N-terminal signal peptide occupies residues 1 to 21 (MVSWGRFICLVLVTMATLSLA). Residues 22–377 (RPSFSLVEDT…EITASPDYLE (356 aa)) lie on the Extracellular side of the membrane. In terms of domain architecture, Ig-like C2-type 1 spans 25–125 (FSLVEDTTLE…ETWIFMVNVT (101 aa)). A disulfide bridge connects residues Cys62 and Cys107. 2 N-linked (GlcNAc...) asparagine glycosylation sites follow: Asn83 and Asn123. The tract at residues 129-151 (SSGDDEDDTDSSEDVVSENRSNQ) is disordered. Residues 131-144 (GDDEDDTDSSEDVV) show a composition bias toward acidic residues. N-linked (GlcNAc...) asparagine glycosylation is present at Asn147. Ig-like C2-type domains follow at residues 154–247 (PYWT…YHLD) and 256–358 (PILQ…AWLT). Residues 161-178 (KMEKRLHACPAANTVKFR) form a heparin-binding region. The cysteines at positions 179 and 231 are disulfide-linked. Residues Asn228, Asn241, Asn265, Asn297, Asn318, and Asn331 are each glycosylated (N-linked (GlcNAc...) asparagine). Cys278 and Cys342 form a disulfide bridge. The chain crosses the membrane as a helical span at residues 378–398 (IAIYCIGVFLIACMVVTVIFC). Residues 399–821 (RMKTTTKKPD…YPHINGSVKT (423 aa)) are Cytoplasmic-facing. Tyr466 carries the post-translational modification Phosphotyrosine; by autocatalysis. One can recognise a Protein kinase domain in the interval 481–770 (LTLGKPLGEG…LTLTTNEEYL (290 aa)). ATP contacts are provided by residues 487–495 (LGEGCFGQV), Lys517, 565–567 (EYA), and Asn571. Residues Tyr586 and Tyr588 each carry the phosphotyrosine; by autocatalysis modification. The Proton acceptor role is filled by Asp626. A phosphotyrosine; by autocatalysis mark is found at Tyr656, Tyr657, and Tyr769. Phosphoserine is present on Ser780.

This sequence belongs to the protein kinase superfamily. Tyr protein kinase family. Fibroblast growth factor receptor subfamily. Monomer. Homodimer after ligand binding. Interacts predominantly with FGF1 and FGF2, but can also interact with FGF3, FGF4, FGF6, FGF7, FGF8, FGF9, FGF10, FGF17, FGF18 and FGF22 (in vitro). Ligand specificity is determined by tissue-specific expression of isoforms, and differences in the third Ig-like domain are crucial for ligand specificity. Affinity for fibroblast growth factors (FGFs) is increased by heparan sulfate glycosaminoglycans that function as coreceptors. Likewise, KLB increases the affinity for FGF19 and FGF21. Interacts with PLCG1. Interacts with GRB2 and PAK4. Interacts with FLRT2. Post-translationally, autophosphorylated. Binding of FGF family members together with heparan sulfate proteoglycan or heparin promotes receptor dimerization and autophosphorylation on tyrosine residues. Autophosphorylation occurs in trans between the two FGFR molecules present in the dimer. In terms of processing, N-glycosylated in the endoplasmic reticulum. The N-glycan chains undergo further maturation to an Endo H-resistant form in the Golgi apparatus. Ubiquitinated. FGFR2 is rapidly ubiquitinated after autophosphorylation, leading to internalization and degradation. Subject to degradation both in lysosomes and by the proteasome.

The protein resides in the cell membrane. The protein localises to the golgi apparatus. It is found in the cytoplasmic vesicle. It carries out the reaction L-tyrosyl-[protein] + ATP = O-phospho-L-tyrosyl-[protein] + ADP + H(+). Present in an inactive conformation in the absence of bound ligand. Ligand binding leads to dimerization and activation by autophosphorylation on tyrosine residues. Functionally, tyrosine-protein kinase that acts as a cell-surface receptor for fibroblast growth factors and plays an essential role in the regulation of cell proliferation, differentiation, migration and apoptosis, and in the regulation of embryonic development. Required for normal embryonic patterning, trophoblast function, limb bud development, lung morphogenesis, osteogenesis and skin development. Plays an essential role in the regulation of osteoblast differentiation, proliferation and apoptosis, and is required for normal skeleton development. Promotes cell proliferation in keratinocytes and immature osteoblasts, but promotes apoptosis in differentiated osteoblasts. Phosphorylates PLCG1, FRS2 and PAK4. Ligand binding leads to the activation of several signaling cascades. Activation of PLCG1 leads to the production of the cellular signaling molecules diacylglycerol and inositol 1,4,5-trisphosphate. Phosphorylation of FRS2 triggers recruitment of GRB2, GAB1, PIK3R1 and SOS1, and mediates activation of RAS, MAPK1/ERK2, MAPK3/ERK1 and the MAP kinase signaling pathway, as well as of the AKT1 signaling pathway. FGFR2 signaling is down-regulated by ubiquitination, internalization and degradation. Mutations that lead to constitutive kinase activation or impair normal FGFR2 maturation, internalization and degradation lead to aberrant signaling. Over-expressed FGFR2 promotes activation of STAT1. This is Fibroblast growth factor receptor 2 (Fgfr2) from Mus musculus (Mouse).